We begin with the raw amino-acid sequence, 184 residues long: Large ribosomal subunit protein uL5 (184 aa).

It belongs to the universal ribosomal protein uL5 family. Part of the 50S ribosomal subunit; part of the 5S rRNA/L5/L18/L25 subcomplex. Contacts the 5S rRNA and the P site tRNA. Forms a bridge to the 30S subunit in the 70S ribosome.

Functionally, this is one of the proteins that bind and probably mediate the attachment of the 5S RNA into the large ribosomal subunit, where it forms part of the central protuberance. In the 70S ribosome it contacts protein S13 of the 30S subunit (bridge B1b), connecting the 2 subunits; this bridge is implicated in subunit movement. Contacts the P site tRNA; the 5S rRNA and some of its associated proteins might help stabilize positioning of ribosome-bound tRNAs. The protein is Large ribosomal subunit protein uL5 of Agrobacterium fabrum (strain C58 / ATCC 33970) (Agrobacterium tumefaciens (strain C58)).